Reading from the N-terminus, the 449-residue chain is Glucose-6-phosphate isomerase (449 aa).

The active-site Proton donor is the E291. Catalysis depends on residues H312 and K426.

The protein belongs to the GPI family.

It is found in the cytoplasm. The enzyme catalyses alpha-D-glucose 6-phosphate = beta-D-fructose 6-phosphate. Its pathway is carbohydrate biosynthesis; gluconeogenesis. It participates in carbohydrate degradation; glycolysis; D-glyceraldehyde 3-phosphate and glycerone phosphate from D-glucose: step 2/4. In terms of biological role, catalyzes the reversible isomerization of glucose-6-phosphate to fructose-6-phosphate. The protein is Glucose-6-phosphate isomerase of Streptococcus pyogenes serotype M6 (strain ATCC BAA-946 / MGAS10394).